The primary structure comprises 137 residues: Putative pre-16S rRNA nuclease (137 aa).

Belongs to the YqgF nuclease family.

The protein resides in the cytoplasm. In terms of biological role, could be a nuclease involved in processing of the 5'-end of pre-16S rRNA. The protein is Putative pre-16S rRNA nuclease of Anaeromyxobacter sp. (strain K).